The chain runs to 124 residues: UPF0102 protein PP_1324 (124 aa).

Belongs to the UPF0102 family.

This is UPF0102 protein PP_1324 from Pseudomonas putida (strain ATCC 47054 / DSM 6125 / CFBP 8728 / NCIMB 11950 / KT2440).